Here is a 438-residue protein sequence, read N- to C-terminus: Proline--tRNA ligase (438 aa).

Belongs to the class-II aminoacyl-tRNA synthetase family. ProS type 2 subfamily. Homodimer.

It localises to the cytoplasm. It catalyses the reaction tRNA(Pro) + L-proline + ATP = L-prolyl-tRNA(Pro) + AMP + diphosphate. Catalyzes the attachment of proline to tRNA(Pro) in a two-step reaction: proline is first activated by ATP to form Pro-AMP and then transferred to the acceptor end of tRNA(Pro). This Gluconobacter oxydans (strain 621H) (Gluconobacter suboxydans) protein is Proline--tRNA ligase.